The primary structure comprises 375 residues: Succinyl-diaminopimelate desuccinylase (375 aa).

H66 lines the Zn(2+) pocket. Residue D68 is part of the active site. D99 contacts Zn(2+). E133 (proton acceptor) is an active-site residue. E134, E162, and H348 together coordinate Zn(2+).

Belongs to the peptidase M20A family. DapE subfamily. As to quaternary structure, homodimer. The cofactor is Zn(2+). Co(2+) serves as cofactor.

It carries out the reaction N-succinyl-(2S,6S)-2,6-diaminopimelate + H2O = (2S,6S)-2,6-diaminopimelate + succinate. The protein operates within amino-acid biosynthesis; L-lysine biosynthesis via DAP pathway; LL-2,6-diaminopimelate from (S)-tetrahydrodipicolinate (succinylase route): step 3/3. Its function is as follows. Catalyzes the hydrolysis of N-succinyl-L,L-diaminopimelic acid (SDAP), forming succinate and LL-2,6-diaminopimelate (DAP), an intermediate involved in the bacterial biosynthesis of lysine and meso-diaminopimelic acid, an essential component of bacterial cell walls. This is Succinyl-diaminopimelate desuccinylase from Salmonella dublin (strain CT_02021853).